The following is a 298-amino-acid chain: tRNA pseudouridine synthase A (298 aa).

Aspartate 56 (nucleophile) is an active-site residue. Tyrosine 125 provides a ligand contact to substrate.

This sequence belongs to the tRNA pseudouridine synthase TruA family. In terms of assembly, homodimer.

The enzyme catalyses uridine(38/39/40) in tRNA = pseudouridine(38/39/40) in tRNA. Formation of pseudouridine at positions 38, 39 and 40 in the anticodon stem and loop of transfer RNAs. The protein is tRNA pseudouridine synthase A of Bifidobacterium animalis subsp. lactis (strain AD011).